Reading from the N-terminus, the 564-residue chain is Type 2 DNA topoisomerase 6 subunit B (564 aa).

Residues asparagine 46, aspartate 78, 99–100 (TK), 109–116 (GQQGIGIS), and lysine 471 each bind ATP.

Belongs to the TOP6B family. As to quaternary structure, homodimer. Heterotetramer of two Top6A and two Top6B chains.

The catalysed reaction is ATP-dependent breakage, passage and rejoining of double-stranded DNA.. Its function is as follows. Relaxes both positive and negative superturns and exhibits a strong decatenase activity. The sequence is that of Type 2 DNA topoisomerase 6 subunit B from Pyrococcus abyssi (strain GE5 / Orsay).